The following is a 215-amino-acid chain: Ras-related protein Rab-5A (215 aa).

The GTP site is built by Ser29, Ala30, Gly32, Lys33, Ser34, Ser35, His46, Glu47, Thr52, and Gly78. Mg(2+) is bound at residue Ser34. 2 short sequence motifs (switch) span residues 44–56 and 77–93; these read QFHEFQESTIGAA and AGQERYHSLAPMYYRGA. Thr52 serves as a coordination point for Mg(2+). Ser84 is subject to Phosphoserine. Residues Asn133, Lys134, Asp136, Ala164, and Lys165 each contribute to the GTP site. A disordered region spans residues 181 to 215; it reads LPKNEPQNPGANSARGRGVDLTEPTQPTRSQCCSN. The segment covering 203–215 has biased composition (polar residues); sequence EPTQPTRSQCCSN. S-geranylgeranyl cysteine attachment occurs at residues Cys212 and Cys213.

Belongs to the small GTPase superfamily. Rab family. As to quaternary structure, interacts with GDI1; this promotes dissociation from membranes; phosphorylation at Ser-84 disrupts this interaction. Interacts with GDI2; phosphorylation at Ser-84 disrupts the interaction. Binds EEA1. Interacts with ALS2CL, SUN2, ZFYVE20 and RUFY1. Interacts with RIN1 and GAPVD1, which regulate its pathway, probably by acting as a GEF. Interacts with SGSM1 and SGSM3. Interacts with PIK3CB. Interacts with RABEP1 and RINL. Interacts with OCRL and INPP5F. May be a component of a complex composed of RAB5A, DYN2 and PIK3C3. Does not interact with the BLOC-3 complex (heterodimer of HPS1 and HPS4). Interacts with CLN5. Interacts with APPL2. Interacts with F8A1/F8A2/F8A3. Found in a complex with F8A1/F8A2/F8A3, HTT and RAB5A; mediates the recruitment of HTT by RAB5A onto early endosomes. Interacts with ATP9A. Interacts with PPP1R21; mediates the recruitment of FERRY complex by RAB5A onto early endosomes. Requires Mg(2+) as cofactor. In terms of processing, phosphorylation of Ser-84 in the switch II region by LRRK2 prevents the association of RAB regulatory proteins, including RAB GDP dissociation inhibitors GDI1 and GDI2.

It localises to the cell membrane. The protein resides in the early endosome membrane. The protein localises to the melanosome. Its subcellular location is the cytoplasmic vesicle. It is found in the cell projection. It localises to the ruffle. The protein resides in the cytoplasm. The protein localises to the cytosol. Its subcellular location is the membrane. It is found in the phagosome membrane. It localises to the endosome membrane. The enzyme catalyses GTP + H2O = GDP + phosphate + H(+). Regulated by guanine nucleotide exchange factors (GEFs) including RINL, which promote the exchange of bound GDP for free GTP. Regulated by GTPase activating proteins (GAPs) which increase the GTP hydrolysis activity. Inhibited by GDP dissociation inhibitors (GDIs). The small GTPases Rab are key regulators of intracellular membrane trafficking, from the formation of transport vesicles to their fusion with membranes. Rabs cycle between an inactive GDP-bound form and an active GTP-bound form that is able to recruit to membranes different sets of downstream effectors directly responsible for vesicle formation, movement, tethering and fusion. RAB5A is required for the fusion of plasma membranes and early endosomes. Contributes to the regulation of filopodia extension. Required for the exosomal release of SDCBP, CD63, PDCD6IP and syndecan. Regulates maturation of apoptotic cell-containing phagosomes, probably downstream of DYN2 and PIK3C3. The sequence is that of Ras-related protein Rab-5A (RAB5A) from Canis lupus familiaris (Dog).